The sequence spans 109 residues: uncharacterized protein (109 aa).

2 consecutive transmembrane segments (helical) span residues 19-39 (LELV…CLIP) and 53-73 (YFID…FYPF).

It localises to the membrane. This is an uncharacterized protein from Saccharomyces cerevisiae (strain ATCC 204508 / S288c) (Baker's yeast).